A 2280-amino-acid chain; its full sequence is Protein Ycf2 (2280 aa).

Residue 1634 to 1641 (GSIGTGRS) coordinates ATP.

It belongs to the Ycf2 family.

Its subcellular location is the plastid. The protein resides in the chloroplast stroma. Functionally, probable ATPase of unknown function. Its presence in a non-photosynthetic plant (Epifagus virginiana) and experiments in tobacco indicate that it has an essential function which is probably not related to photosynthesis. This is Protein Ycf2 from Eucalyptus globulus subsp. globulus (Tasmanian blue gum).